A 511-amino-acid polypeptide reads, in one-letter code: Lysine--tRNA ligase (511 aa).

2 residues coordinate Mg(2+): Glu-422 and Glu-429.

It belongs to the class-II aminoacyl-tRNA synthetase family. Homodimer. Mg(2+) serves as cofactor.

It localises to the cytoplasm. It carries out the reaction tRNA(Lys) + L-lysine + ATP = L-lysyl-tRNA(Lys) + AMP + diphosphate. The protein is Lysine--tRNA ligase of Chlorobaculum tepidum (strain ATCC 49652 / DSM 12025 / NBRC 103806 / TLS) (Chlorobium tepidum).